Consider the following 152-residue polypeptide: Large ribosomal subunit protein bL9 (152 aa).

This sequence belongs to the bacterial ribosomal protein bL9 family.

In terms of biological role, binds to the 23S rRNA. This chain is Large ribosomal subunit protein bL9, found in Pelagibacter ubique (strain HTCC1062).